The following is a 141-amino-acid chain: VLSPADKSNVKAAWGKVGSHAGDYGAEALERMFLSFPTTKTYFPHFDLSHGSAQVKGHGKKVADALTNAVAHVDDMPNALSALSDLHAHKLRVDPVNFKLLSHCLLVTLAAHHPAEFTPAVHASLDKFLASVSTVLTSKYR.

Positions valine 1 to arginine 141 constitute a Globin domain. Serine 3 is subject to Phosphoserine. An N6-succinyllysine mark is found at lysine 7 and lysine 11. N6-acetyllysine; alternate is present on lysine 16. An N6-succinyllysine; alternate modification is found at lysine 16. Phosphotyrosine is present on tyrosine 24. Residue serine 35 is modified to Phosphoserine. Lysine 40 carries the N6-succinyllysine modification. Position 49 is a phosphoserine (serine 49). O2 is bound at residue histidine 58. Histidine 87 contacts heme b. At serine 102 the chain carries Phosphoserine. Threonine 108 carries the phosphothreonine modification. 2 positions are modified to phosphoserine: serine 124 and serine 131. Phosphothreonine occurs at positions 134 and 137. Serine 138 carries the post-translational modification Phosphoserine.

It belongs to the globin family. As to quaternary structure, heterotetramer of two alpha chains and two beta chains. Red blood cells.

Its function is as follows. Involved in oxygen transport from the lung to the various peripheral tissues. In terms of biological role, hemopressin acts as an antagonist peptide of the cannabinoid receptor CNR1. Hemopressin-binding efficiently blocks cannabinoid receptor CNR1 and subsequent signaling. This Mico argentatus (Silvery marmoset) protein is Hemoglobin subunit alpha (HBA).